The following is a 93-amino-acid chain: Pyrimidine/purine nucleoside phosphorylase (93 aa).

This sequence belongs to the nucleoside phosphorylase PpnP family.

It catalyses the reaction a purine D-ribonucleoside + phosphate = a purine nucleobase + alpha-D-ribose 1-phosphate. The enzyme catalyses adenosine + phosphate = alpha-D-ribose 1-phosphate + adenine. It carries out the reaction cytidine + phosphate = cytosine + alpha-D-ribose 1-phosphate. The catalysed reaction is guanosine + phosphate = alpha-D-ribose 1-phosphate + guanine. It catalyses the reaction inosine + phosphate = alpha-D-ribose 1-phosphate + hypoxanthine. The enzyme catalyses thymidine + phosphate = 2-deoxy-alpha-D-ribose 1-phosphate + thymine. It carries out the reaction uridine + phosphate = alpha-D-ribose 1-phosphate + uracil. The catalysed reaction is xanthosine + phosphate = alpha-D-ribose 1-phosphate + xanthine. In terms of biological role, catalyzes the phosphorolysis of diverse nucleosides, yielding D-ribose 1-phosphate and the respective free bases. Can use uridine, adenosine, guanosine, cytidine, thymidine, inosine and xanthosine as substrates. Also catalyzes the reverse reactions. This Vibrio vulnificus (strain CMCP6) protein is Pyrimidine/purine nucleoside phosphorylase.